The primary structure comprises 150 residues: Small ribosomal subunit protein uS13 (150 aa).

The protein belongs to the universal ribosomal protein uS13 family. In terms of assembly, part of the 30S ribosomal subunit. Forms a loose heterodimer with protein S19. Forms two bridges to the 50S subunit in the 70S ribosome.

Its function is as follows. Located at the top of the head of the 30S subunit, it contacts several helices of the 16S rRNA. In the 70S ribosome it contacts the 23S rRNA (bridge B1a) and protein L5 of the 50S subunit (bridge B1b), connecting the 2 subunits; these bridges are implicated in subunit movement. The sequence is that of Small ribosomal subunit protein uS13 from Aeropyrum pernix (strain ATCC 700893 / DSM 11879 / JCM 9820 / NBRC 100138 / K1).